A 597-amino-acid polypeptide reads, in one-letter code: Probable tyrosine-protein phosphatase (597 aa).

A compositionally biased stretch (low complexity) spans 55 to 81 (VSSSSDAAPTSISTTTTSTTSMTDASA). Disordered regions lie at residues 55–89 (VSSS…QQVY), 107–172 (SFSI…PNSL), and 188–228 (STNG…GNNN). The segment covering 107 to 126 (SFSIQPNQTPTMLPTSSYTL) has biased composition (polar residues). Low complexity predominate over residues 136–151 (TSSISSISSTSSNSTS). Composition is skewed to polar residues over residues 188–206 (STNG…NQPR) and 216–228 (KKST…GNNN). One can recognise a Tyrosine-protein phosphatase domain in the interval 428–579 (GPKNVLNNLI…LMEFGDKLNN (152 aa)). Cysteine 516 serves as the catalytic Phosphocysteine intermediate.

This sequence belongs to the protein-tyrosine phosphatase family. Non-receptor class dual specificity subfamily.

The catalysed reaction is O-phospho-L-tyrosyl-[protein] + H2O = L-tyrosyl-[protein] + phosphate. This is Probable tyrosine-protein phosphatase (CPP1) from Candida albicans (strain WO-1) (Yeast).